A 121-amino-acid chain; its full sequence is Group 1 truncated hemoglobin (121 aa).

Met1 bears the N-acetylmethionine mark. His73 is a binding site for heme.

Belongs to the truncated hemoglobin family. Group I subfamily. As to quaternary structure, monomer. Heme serves as cofactor.

This chain is Group 1 truncated hemoglobin, found in Tetrahymena thermophila.